Reading from the N-terminus, the 1202-residue chain is MDKKAIKTFAIQARRSLIESIKLKLENLGITKDGVAEKMSQSTNEIEYYGDKGLSITGQDIRRRRELVARLKGMAKQEEWSDALTDLIEEVAYTWFNRIIAIRFMEVNEYLPSGVRVLSSETKLKVPDILREAFEIEDDLGGYSVDEHGIIQKALDTEDPTDMDAAYVILFTKQANALNHYLPELFEKTDDFMQLLFTPSYSSGVIKDLVDDIKEDDFDVDEGGQVEIIGWLYQYYNTEPKDAAFKKKKYLSSDIPAVTQLFTPDWIVKYLVENSLGRYWIRVLHDRGDERTSLQIAQSFNWQYFMPEAKQDEISTRADLSKKRVEEITFVDPAMGSGHILIYAFDVLLQLYQSEGYSRREAAQNIVERNLFGLDIDRRAFQLTYFAMMMKLRRENRRSFELQLHPNVFEVPSTSLELKDFSGAKDGSPIDSGNLSDVLGRFGAGKELGSLITFESSIFDDKLINKIVSEREAGQLTFEMSDQVNHQWELRNLIRVGKALSSQYTISVTNPPYMGSGKMPKTLAKFVGKYYPASKSDLFAVFMERLQHLTKENGIFAMITQHQWMFLSSFKALRERMSSWPIINMAHLGTRAFEEIGGEVVQTTAFVVQKQKLQGFIGTYERLVDFDSQKKKQQAFLTAVQNPNLNYVYRTKQTNFEKIPGSPIAYWASKKKLELLQYSSYRLQNILSAREGMTTGNNALFMRSWHEVQFFKISFLSTAHQIERDKTWFPYNKGGAFRKWYGNIWYVINWKNHGEAIQSNIDKKTGRIRSHNYNGKFGFREAITWSAISSGMFSARYSPTGFLFDSKGVSSFANDHTTLLFCLAFLNSNSSSSFLELLSPTMDFKIGQVLNLPLAKQHSPQVVELTESLISSSREDWNSFENSWSFTTNILLTNIAEHHRNWTVEAAFQQWQKEADDRFNQLKANEEELNRIFIDLYGLQDELSPEEEDKDVSVRRANLPRDIKAFISYFIGCVFGRYSIDTPGLAYAGGDWDASKYKTFIPNKDDLILLTDDDYFGDDRDVMTRFKEFLTTTFGSENLNENLKFIADALGKRGDSSEEQIRAYLRDDFFKKDHLSTYQKRPIYWEFNSGRNGGFKALMYLHRYDRNTVAMIRTKYLHPLQEAYERKLVQLKKFEENEQQTRQKNKYKKQITTITKELDELIKYDEKLQHVANLHIDLDLDDGVLVNHAKAQADTKILTPLK.

It belongs to the methyltransferase superfamily. PglX adenine methyltransferase family.

The catalysed reaction is a 2'-deoxyadenosine in DNA + S-adenosyl-L-methionine = an N(6)-methyl-2'-deoxyadenosine in DNA + S-adenosyl-L-homocysteine + H(+). Functionally, BREX systems (bacteriophage exclusion) provide immunity against bacteriophage. Part of a type 1 BREX system which protects against dsDNA phage. This system allows phage adsorption but prevents phage DNA replication, without degradation of the phage DNA. Methylation of bacterial DNA by this protein guides self/non-self discrimination. Probably methylates the adenine in the fifth position of the hexamer 5'-ACRCAG-3' in genomic DNA. N(6)-methylated adenine on the fifth position of 5'-ACRCAG-3' is found in the genome; there are 1906 sites in the genomic DNA. The protein is Adenine-specific methyltransferase PglX of Lacticaseibacillus casei (strain Zhang) (Lactobacillus casei).